We begin with the raw amino-acid sequence, 125 residues long: uncharacterized protein (125 aa).

It belongs to the asfivirus B125R family.

This is an uncharacterized protein from African swine fever virus (isolate Pig/Kenya/KEN-50/1950) (ASFV).